The chain runs to 159 residues: Ribosomal RNA large subunit methyltransferase H (159 aa).

S-adenosyl-L-methionine contacts are provided by residues Leu76, Gly108, and 127–132 (FGLLTL).

It belongs to the RNA methyltransferase RlmH family. In terms of assembly, homodimer.

The protein localises to the cytoplasm. The enzyme catalyses pseudouridine(1915) in 23S rRNA + S-adenosyl-L-methionine = N(3)-methylpseudouridine(1915) in 23S rRNA + S-adenosyl-L-homocysteine + H(+). Its function is as follows. Specifically methylates the pseudouridine at position 1915 (m3Psi1915) in 23S rRNA. This Leuconostoc mesenteroides subsp. mesenteroides (strain ATCC 8293 / DSM 20343 / BCRC 11652 / CCM 1803 / JCM 6124 / NCDO 523 / NBRC 100496 / NCIMB 8023 / NCTC 12954 / NRRL B-1118 / 37Y) protein is Ribosomal RNA large subunit methyltransferase H.